The chain runs to 503 residues: Aromatase 1 (503 aa).

Cys-437 contacts heme.

Belongs to the cytochrome P450 family. It depends on heme as a cofactor.

Its subcellular location is the membrane. The catalysed reaction is testosterone + 3 reduced [NADPH--hemoprotein reductase] + 3 O2 = 17beta-estradiol + formate + 3 oxidized [NADPH--hemoprotein reductase] + 4 H2O + 4 H(+). It carries out the reaction androst-4-ene-3,17-dione + 3 reduced [NADPH--hemoprotein reductase] + 3 O2 = estrone + formate + 3 oxidized [NADPH--hemoprotein reductase] + 4 H2O + 4 H(+). Functionally, catalyzes the formation of aromatic C18 estrogens from C19 androgens. This is Aromatase 1 (CYP19A1) from Sus scrofa (Pig).